Reading from the N-terminus, the 88-residue chain is Small ribosomal subunit protein bS16 (88 aa).

Belongs to the bacterial ribosomal protein bS16 family.

The protein is Small ribosomal subunit protein bS16 of Leptospira interrogans serogroup Icterohaemorrhagiae serovar Lai (strain 56601).